Here is a 318-residue protein sequence, read N- to C-terminus: Taste receptor type 2 member 60 (318 aa).

The Extracellular portion of the chain corresponds to 1–7; the sequence is MNGDHMV. Residues 8–28 traverse the membrane as a helical segment; that stretch reads LGSSVTDQKAIILVIILLLLC. Over 29-40 the chain is Cytoplasmic; it reads LVAIAGNGFITA. A helical membrane pass occupies residues 41–61; sequence ALGVEWVLRGTLLPCDKLLVS. At 62-88 the chain is on the extracellular side; that stretch reads LRASRFCLQWVVMGKTIYVLLYPTAFP. The chain crosses the membrane as a helical span at residues 89 to 109; sequence YNPVLQFLAFQWDFLNAATLW. Residues 110 to 128 are Cytoplasmic-facing; that stretch reads FSSWLSVFYCVKIATFTHP. The helical transmembrane segment at 129 to 149 threads the bilayer; sequence VFLWLKHKLSEWVPWMFFSSV. The Extracellular segment spans residues 150 to 183; sequence GLSSFTTILFFIGNHSIYQNYLRNHLQPWNVTGN. Asn-163 and Asn-179 each carry an N-linked (GlcNAc...) asparagine glycan. The helical transmembrane segment at 184–204 threads the bilayer; the sequence is SIWSYCEKFYLFPVKMITWTM. At 205–234 the chain is on the cytoplasmic side; that stretch reads PTAVFFICMILLITSLGRHMEKALLTTSGF. Residues 235-255 form a helical membrane-spanning segment; it reads REPSVQAHVKALLALLSLAML. Over 256–264 the chain is Extracellular; sequence FISYFLSLV. The helical transmembrane segment at 265–285 threads the bilayer; that stretch reads LSAAGIFPPLDFKFWVGESVI. Topologically, residues 286–318 are cytoplasmic; it reads YLCAGVHPIILLFSNRRLRAVLERCRSSRCRTP.

This sequence belongs to the G-protein coupled receptor T2R family.

It localises to the membrane. Receptor that may play a role in the perception of bitterness and is gustducin-linked. May play a role in sensing the chemical composition of the gastrointestinal content. The activity of this receptor may stimulate alpha gustducin, mediate PLC-beta-2 activation and lead to the gating of TRPM5. The protein is Taste receptor type 2 member 60 (TAS2R60) of Macaca mulatta (Rhesus macaque).